The following is a 170-amino-acid chain: Ureidoglycolate lyase (170 aa).

The protein belongs to the ureidoglycolate lyase family. In terms of assembly, homodimer. It depends on Ni(2+) as a cofactor.

The catalysed reaction is (S)-ureidoglycolate = urea + glyoxylate. The protein operates within nitrogen metabolism; (S)-allantoin degradation. Catalyzes the catabolism of the allantoin degradation intermediate (S)-ureidoglycolate, generating urea and glyoxylate. Involved in the utilization of allantoin as nitrogen source. The sequence is that of Ureidoglycolate lyase from Pseudomonas savastanoi pv. phaseolicola (strain 1448A / Race 6) (Pseudomonas syringae pv. phaseolicola (strain 1448A / Race 6)).